The primary structure comprises 353 residues: MKLSKTFLFITALCCATPTLAIQNSTSSSGEQKMAMENTQNIREIYLAGGCFWGMEAYMERIHGVKDAISGYANGNTEKTSYQMIGLTDHAETVKVTYDANQISLDKLLKYYFKVIDPTSVNKQGNDRGRQYRTGIYYQDGADKAVIGQALAQLQTKYKKPVQIEVQPLKNYIVAEEYHQDYLKKNPNGYCHIDITKADEPVIDEKDYPKPSDAELKAKLTPLQYSVTQNKHTERSFSNEYWDNFQPGIYVDITTGEPVFSSNDKFESGCGWPSFTKPIIKDVVHYETDNSFNMQRTEVLSRAGNAHLGHVFDDGPKDKGGLRYCINSASIKFIPLAEMEKAGYGYLIQSIKK.

Residues 43–196 are peptide methionine sulfoxide reductase A; it reads REIYLAGGCF…PNGYCHIDIT (154 aa). Cys51 is a catalytic residue. Positions 213 to 336 constitute a MsrB domain; it reads DAELKAKLTP…NSASIKFIPL (124 aa). Cys325 serves as the catalytic Nucleophile.

This sequence in the N-terminal section; belongs to the MsrA Met sulfoxide reductase family. It in the C-terminal section; belongs to the MsrB Met sulfoxide reductase family.

It carries out the reaction L-methionyl-[protein] + [thioredoxin]-disulfide + H2O = L-methionyl-(S)-S-oxide-[protein] + [thioredoxin]-dithiol. It catalyses the reaction [thioredoxin]-disulfide + L-methionine + H2O = L-methionine (S)-S-oxide + [thioredoxin]-dithiol. The enzyme catalyses L-methionyl-[protein] + [thioredoxin]-disulfide + H2O = L-methionyl-(R)-S-oxide-[protein] + [thioredoxin]-dithiol. Functionally, has an important function as a repair enzyme for proteins that have been inactivated by oxidation. Catalyzes the reversible oxidation-reduction of methionine sulfoxide in proteins to methionine. The protein is Peptide methionine sulfoxide reductase MsrA/MsrB (msrAB) of Haemophilus influenzae (strain ATCC 51907 / DSM 11121 / KW20 / Rd).